The primary structure comprises 430 residues: UDP-N-acetylglucosamine 1-carboxyvinyltransferase (430 aa).

22–23 (KN) contributes to the phosphoenolpyruvate binding site. Residue Arg102 coordinates UDP-N-acetyl-alpha-D-glucosamine. The Proton donor role is filled by Cys126. A 2-(S-cysteinyl)pyruvic acid O-phosphothioketal modification is found at Cys126. UDP-N-acetyl-alpha-D-glucosamine contacts are provided by residues 131–135 (RPVDL), 172–175 (KVSV), Asp317, and Ile339.

It belongs to the EPSP synthase family. MurA subfamily.

It is found in the cytoplasm. It carries out the reaction phosphoenolpyruvate + UDP-N-acetyl-alpha-D-glucosamine = UDP-N-acetyl-3-O-(1-carboxyvinyl)-alpha-D-glucosamine + phosphate. Its pathway is cell wall biogenesis; peptidoglycan biosynthesis. In terms of biological role, cell wall formation. Adds enolpyruvyl to UDP-N-acetylglucosamine. This chain is UDP-N-acetylglucosamine 1-carboxyvinyltransferase, found in Agrobacterium fabrum (strain C58 / ATCC 33970) (Agrobacterium tumefaciens (strain C58)).